The chain runs to 191 residues: Fe/S biogenesis protein NfuA (191 aa).

Residues Cys-149 and Cys-152 each contribute to the [4Fe-4S] cluster site.

Belongs to the NfuA family. Homodimer. The cofactor is [4Fe-4S] cluster.

Its function is as follows. Involved in iron-sulfur cluster biogenesis. Binds a 4Fe-4S cluster, can transfer this cluster to apoproteins, and thereby intervenes in the maturation of Fe/S proteins. Could also act as a scaffold/chaperone for damaged Fe/S proteins. The polypeptide is Fe/S biogenesis protein NfuA (Sodalis glossinidius (strain morsitans)).